The following is a 535-amino-acid chain: Thermosome subunit gamma (535 aa).

This sequence belongs to the TCP-1 chaperonin family. Forms a heterooligomeric complex of two stacked nine-membered rings; one of alpha and the other of beta subunits.

It localises to the cytoplasm. It carries out the reaction ATP + H2O = ADP + phosphate + H(+). In terms of biological role, molecular chaperone; binds unfolded polypeptides in vitro, and has a weak ATPase activity. This Saccharolobus shibatae (strain ATCC 51178 / DSM 5389 / JCM 8931 / NBRC 15437 / B12) (Sulfolobus shibatae) protein is Thermosome subunit gamma (thsC).